The primary structure comprises 138 residues: Microneme antigen L2 (138 aa).

2 consecutive PAN domains span residues 9–78 (CFAH…PRSC) and 82–138 (CSDA…SKRA). Intrachain disulfides connect C9–C78, C34–C56, C38–C44, C82–C86, C107–C127, and C111–C117. S18 contacts a carbohydrate. 3 residues coordinate a carbohydrate: K59, Y66, and D71.

As to quaternary structure, homodimer or heterodimer. In terms of processing, contains six disulfide bonds.

The protein localises to the cytoplasmic vesicle. The protein resides in the secretory vesicle. It localises to the microneme. Its function is as follows. Galactose-binding lectin. Plays a role in adhesion to the host cell. Has a potential role in invasion of host cells. The polypeptide is Microneme antigen L2 (Sarcocystis muris).